We begin with the raw amino-acid sequence, 296 residues long: Small ribosomal subunit biogenesis GTPase RsgA (296 aa).

The CP-type G domain occupies Arg-63 to Tyr-224. Residues Ser-112–Asp-115 and Gly-167–Thr-175 contribute to the GTP site. Positions 248, 253, 255, and 261 each coordinate Zn(2+).

Belongs to the TRAFAC class YlqF/YawG GTPase family. RsgA subfamily. In terms of assembly, monomer. Associates with 30S ribosomal subunit, binds 16S rRNA. The cofactor is Zn(2+).

It is found in the cytoplasm. Its function is as follows. One of several proteins that assist in the late maturation steps of the functional core of the 30S ribosomal subunit. Helps release RbfA from mature subunits. May play a role in the assembly of ribosomal proteins into the subunit. Circularly permuted GTPase that catalyzes slow GTP hydrolysis, GTPase activity is stimulated by the 30S ribosomal subunit. The polypeptide is Small ribosomal subunit biogenesis GTPase RsgA (Limosilactobacillus reuteri (strain DSM 20016) (Lactobacillus reuteri)).